A 122-amino-acid chain; its full sequence is Diacylglycerol kinase (122 aa).

Arg10 and Tyr17 together coordinate ATP. Substrate is bound by residues Arg10, Ala14 to Trp19, and Arg23 to Trp26. Glu29 provides a ligand contact to ATP. Glu29 is a binding site for a divalent metal cation. Residues Ala31 to Glu35, Trp48 to Val51, Arg56, and Glu70 each bind substrate. Residues Glu35–Thr55 form a helical membrane-spanning segment. A helical transmembrane segment spans residues Val57–Glu77. Catalysis depends on Glu70, which acts as the Proton acceptor. Residues Glu77, Glu86–His88, and Lys95–Asp96 contribute to the ATP site. Glu77 is a binding site for a divalent metal cation. A helical membrane pass occupies residues Gly98–Trp118. Residues Ser99 and Trp113–Trp118 contribute to the substrate site.

The protein belongs to the bacterial diacylglycerol kinase family. Requires Mg(2+) as cofactor.

Its subcellular location is the cell inner membrane. It catalyses the reaction a 1,2-diacyl-sn-glycerol + ATP = a 1,2-diacyl-sn-glycero-3-phosphate + ADP + H(+). Catalyzes the ATP-dependent phosphorylation of sn-l,2-diacylglycerol (DAG) to phosphatidic acid. Involved in the recycling of diacylglycerol produced as a by-product during membrane-derived oligosaccharide (MDO) biosynthesis. The protein is Diacylglycerol kinase (dgkA) of Shigella flexneri.